A 154-amino-acid polypeptide reads, in one-letter code: SsrA-binding protein (154 aa).

The protein belongs to the SmpB family.

Its subcellular location is the cytoplasm. Functionally, required for rescue of stalled ribosomes mediated by trans-translation. Binds to transfer-messenger RNA (tmRNA), required for stable association of tmRNA with ribosomes. tmRNA and SmpB together mimic tRNA shape, replacing the anticodon stem-loop with SmpB. tmRNA is encoded by the ssrA gene; the 2 termini fold to resemble tRNA(Ala) and it encodes a 'tag peptide', a short internal open reading frame. During trans-translation Ala-aminoacylated tmRNA acts like a tRNA, entering the A-site of stalled ribosomes, displacing the stalled mRNA. The ribosome then switches to translate the ORF on the tmRNA; the nascent peptide is terminated with the 'tag peptide' encoded by the tmRNA and targeted for degradation. The ribosome is freed to recommence translation, which seems to be the essential function of trans-translation. The polypeptide is SsrA-binding protein (Staphylococcus aureus (strain Mu3 / ATCC 700698)).